Reading from the N-terminus, the 465-residue chain is ATP synthase subunit beta (465 aa).

153-160 (GGAGVGKT) contacts ATP.

The protein belongs to the ATPase alpha/beta chains family. F-type ATPases have 2 components, CF(1) - the catalytic core - and CF(0) - the membrane proton channel. CF(1) has five subunits: alpha(3), beta(3), gamma(1), delta(1), epsilon(1). CF(0) has three main subunits: a(1), b(2) and c(9-12). The alpha and beta chains form an alternating ring which encloses part of the gamma chain. CF(1) is attached to CF(0) by a central stalk formed by the gamma and epsilon chains, while a peripheral stalk is formed by the delta and b chains.

It is found in the cell membrane. It carries out the reaction ATP + H2O + 4 H(+)(in) = ADP + phosphate + 5 H(+)(out). Its function is as follows. Produces ATP from ADP in the presence of a proton gradient across the membrane. The catalytic sites are hosted primarily by the beta subunits. The protein is ATP synthase subunit beta of Clostridium perfringens (strain ATCC 13124 / DSM 756 / JCM 1290 / NCIMB 6125 / NCTC 8237 / Type A).